Reading from the N-terminus, the 58-residue chain is Small ribosomal subunit protein bS21 (58 aa).

The segment at 36-58 is disordered; that stretch reads EHYEKPSVKRKKKSEAARKRKFK. Residues 43 to 58 show a composition bias toward basic residues; it reads VKRKKKSEAARKRKFK.

Belongs to the bacterial ribosomal protein bS21 family.

This is Small ribosomal subunit protein bS21 from Clostridium kluyveri (strain NBRC 12016).